We begin with the raw amino-acid sequence, 112 residues long: Signal recognition particle 19 kDa protein (112 aa).

Belongs to the SRP19 family. As to quaternary structure, part of the signal recognition particle protein translocation system, which is composed of SRP and FtsY. Archaeal SRP consists of a 7S RNA molecule of 300 nucleotides and two protein subunits: SRP54 and SRP19.

The protein localises to the cytoplasm. In terms of biological role, involved in targeting and insertion of nascent membrane proteins into the cytoplasmic membrane. Binds directly to 7S RNA and mediates binding of the 54 kDa subunit of the SRP. The protein is Signal recognition particle 19 kDa protein of Aeropyrum pernix (strain ATCC 700893 / DSM 11879 / JCM 9820 / NBRC 100138 / K1).